Reading from the N-terminus, the 208-residue chain is ATP-dependent Clp protease proteolytic subunit (208 aa).

The active-site Nucleophile is serine 107. Histidine 132 is an active-site residue.

Belongs to the peptidase S14 family. As to quaternary structure, fourteen ClpP subunits assemble into 2 heptameric rings which stack back to back to give a disk-like structure with a central cavity, resembling the structure of eukaryotic proteasomes.

It is found in the cytoplasm. It carries out the reaction Hydrolysis of proteins to small peptides in the presence of ATP and magnesium. alpha-casein is the usual test substrate. In the absence of ATP, only oligopeptides shorter than five residues are hydrolyzed (such as succinyl-Leu-Tyr-|-NHMec, and Leu-Tyr-Leu-|-Tyr-Trp, in which cleavage of the -Tyr-|-Leu- and -Tyr-|-Trp bonds also occurs).. Cleaves peptides in various proteins in a process that requires ATP hydrolysis. Has a chymotrypsin-like activity. Plays a major role in the degradation of misfolded proteins. In Jannaschia sp. (strain CCS1), this protein is ATP-dependent Clp protease proteolytic subunit.